Reading from the N-terminus, the 242-residue chain is Venom nerve growth factor 2 (242 aa).

The first 18 residues, 1–18 (MSMLCYTLIIAFLIGIWA), serve as a signal peptide directing secretion. Positions 19–125 (APKSEDNVPL…ALNRNIRSKR (107 aa)) are excised as a propeptide. The segment at 46-69 (KALKTSRNTDQRHPAPKKAEDQEL) is disordered. Over residues 52–66 (RNTDQRHPAPKKAED) the composition is skewed to basic and acidic residues. Disulfide bonds link C139/C203, C181/C231, and C191/C233. N147 is a glycosylation site (N-linked (GlcNAc...) asparagine).

It belongs to the NGF-beta family. In terms of assembly, homodimer; non-covalently linked. Expressed by the venom gland.

It is found in the secreted. Nerve growth factor is important for the development and maintenance of the sympathetic and sensory nervous systems. It stimulates division and differentiation of sympathetic and embryonic sensory neurons as well as basal forebrain cholinergic neurons in the brain. Its relevance in the snake venom is not clear. However, it has been shown to inhibit metalloproteinase-dependent proteolysis of platelet glycoprotein Ib alpha, suggesting a metalloproteinase inhibition to prevent metalloprotease autodigestion and/or protection against prey proteases. Binds a lipid between the two protein chains in the homodimer. The lipid-bound form promotes histamine relase from mouse mast cells, contrary to the lipid-free form. In Demansia vestigiata (Lesser black whip snake), this protein is Venom nerve growth factor 2.